The primary structure comprises 270 residues: tRNA pseudouridine synthase A (270 aa).

Residue Asp51 is the Nucleophile of the active site. A substrate-binding site is contributed by Tyr109.

This sequence belongs to the tRNA pseudouridine synthase TruA family. Homodimer.

The enzyme catalyses uridine(38/39/40) in tRNA = pseudouridine(38/39/40) in tRNA. Formation of pseudouridine at positions 38, 39 and 40 in the anticodon stem and loop of transfer RNAs. This chain is tRNA pseudouridine synthase A, found in Burkholderia mallei (strain ATCC 23344).